The chain runs to 514 residues: 2-isopropylmalate synthase (514 aa).

In terms of domain architecture, Pyruvate carboxyltransferase spans 5–267 (VIIFDTTLRD…ETNIKHEEIH (263 aa)). Mn(2+) contacts are provided by Asp14, His202, His204, and Asn238. The interval 392-514 (KLNYLSVQSG…AEIKERIATV (123 aa)) is regulatory domain.

This sequence belongs to the alpha-IPM synthase/homocitrate synthase family. LeuA type 1 subfamily. Homodimer. Mn(2+) serves as cofactor.

Its subcellular location is the cytoplasm. It carries out the reaction 3-methyl-2-oxobutanoate + acetyl-CoA + H2O = (2S)-2-isopropylmalate + CoA + H(+). It participates in amino-acid biosynthesis; L-leucine biosynthesis; L-leucine from 3-methyl-2-oxobutanoate: step 1/4. Catalyzes the condensation of the acetyl group of acetyl-CoA with 3-methyl-2-oxobutanoate (2-ketoisovalerate) to form 3-carboxy-3-hydroxy-4-methylpentanoate (2-isopropylmalate). In Photobacterium profundum (strain SS9), this protein is 2-isopropylmalate synthase.